Here is a 291-residue protein sequence, read N- to C-terminus: Nucleotide-binding protein lin2617 (291 aa).

13-20 (GMSGAGKT) serves as a coordination point for ATP. 63-66 (DLRG) lines the GTP pocket.

Belongs to the RapZ-like family.

Functionally, displays ATPase and GTPase activities. The protein is Nucleotide-binding protein lin2617 of Listeria innocua serovar 6a (strain ATCC BAA-680 / CLIP 11262).